Here is a 1446-residue protein sequence, read N- to C-terminus: MAAILLLLLGFSWSLAVESALAPKESESSASAMLGAGTGAAATVSLSGDYSSLLSNVPAASPVPANPSQPSGPANQCSWSYNGTSSVHCALRLIERQPGLDLQGADGSSQLTIQCSELYLFESTLPVAVFARLQTLEALRLDSCKLLQLPNNAFEGLATLKSLRLSTHNSEWGPTRTLELFPDSLGGLKQLTDLDLGDNNLRQLPSGFLCPVGNLQVLNLTRNRIRTAEQMGFADMNCGAGSGSAGSELQVLDASHNELRSISESWGISRLRRLQHLNLAYNNLSELSGEALAGLASLRIVNLSNNHLETLPEGLFAGSKELREIHLQQNELYELPKGLFHRLEQLLVVDLSGNQLTSNHVDNTTFAGLIRLIVLNLAHNALTRIDYRTFKELYFLQILNLRNNSIGHIEDNAFLPLYNLHTLNLAENRLHTLDDKLFNGLYVLSKLTLNNNLISVVEPAVFKNCSDLKELDLSSNQLNEVPRALQDLAMLRTLDLGENQIRTFDNQSFKNLHQLTGLRLIDNQIGNITVGMFQDLPRLSVLNLAKNRIQSIERGSFDKNFELEAIRLDRNFLADINGVFATLVSLLWLNLSENHLVWFDYAFIPSNLKWLDIHGNYIEALGNYYKLQEEIRVKTLDASHNRITEIGPMSIPNTIELLFINNNLIGNVQPNAFVDKANLARVDLYANQLSKLQLQQLRVAPVVAPKPLPEFYLGGNPFECDCTMDWLQRINNLTTRQHPRVMDMANIECVMPHARGAAVRPLSGLRPQDFLCRYESHCFALCHCCDFDACDCEMTCPSNCTCYHDQIWSTNVVDCGGQQTTELPRRVPMDSSVVYLDGNNFPVLKNHAFIGRKNLRALYVNGSQVAAIQNRTFASLASLQLLHLADNKLRTLHGYEFEQLSALRELYLQNNQLTTIENATLAPLAALELIRIDGNRLVTLPIWQMHATHFGTRLKSISLGRNQWSCRCQFLQALTSYVADNALIVQDAQDIYCMAASSGTGSAALEDSSSNSGSLEKRELDFNATGAACTDYYSGGSMLQHGIPESYIPLLAAALALLFLLVVIAMVFAFRESLRIWLFAHYGVRVFGPRCEESEKLYDAVLLHSAKDSEFVCQHLAAQLETGRPPLRVCLQHRDLAHDATHYQLLEATRVSRRVVILLTRNFLQTEWARCELRRSVHDALRGRPQKLVIIEEPEVAFEAESDIELLPYLKTSAVHRIRRSDRHFWEKLRYALPVDYPTFRGNNYTLELDHHNHERVKQPASPGLLYRQAPPPAYCGPADAVGIGAVPQVVPVNASVPAEQNYSTATTATPSPRPQRRGEQPGSGSGGNHHLHAQYYQHHGMRPPSEHIYSSIDSDYSTLDNEQHMLMMPGAPGGLAMEAAQRAQTWRPKREQLHLQQAQAGTLGSKASQAAHQQQQQQQQQQQQQPNPTAVSGQQQGPHVQAYLV.

The first 16 residues, 1-16, serve as a signal peptide directing secretion; sequence MAAILLLLLGFSWSLA. Topologically, residues 17–1049 are extracellular; sequence VESALAPKES…QHGIPESYIP (1033 aa). LRR repeat units lie at residues 133-156, 158-180, 188-211, 213-235, 246-270, 271-294, 295-318, 320-342, 344-368, 369-392, 393-416, 417-440, 442-464, 465-488, 489-511, 513-535, 536-559, 561-582, 584-605, 606-629, 631-652, 653-675, and 677-699; these read LQTLEALRLDSCKLLQLPNNAFEG, ATLKSLRLSTHNSEWGPTRTLEL, LKQLTDLDLGDNNLRQLPSGFLCP, GNLQVLNLTRNRIRTAEQMGFAD, GSELQVLDASHNELRSISESWGISR, LRRLQHLNLAYNNLSELSGEALAG, LASLRIVNLSNNHLETLPEGLFAG, KELREIHLQQNELYELPKGLFHR, EQLLVVDLSGNQLTSNHVDNTTFAG, LIRLIVLNLAHNALTRIDYRTFKE, LYFLQILNLRNNSIGHIEDNAFLP, LYNLHTLNLAENRLHTLDDKLFNG, YVLSKLTLNNNLISVVEPAVFKN, CSDLKELDLSSNQLNEVPRALQDL, AMLRTLDLGENQIRTFDNQSFKN, HQLTGLRLIDNQIGNITVGMFQD, LPRLSVLNLAKNRIQSIERGSFDK, FELEAIRLDRNFLADINGVFAT, VSLLWLNLSENHLVWFDYAFIP, SNLKWLDIHGNYIEALGNYYKLQE, IRVKTLDASHNRITEIGPMSIP, NTIELLFINNNLIGNVQPNAFVD, and ANLARVDLYANQLSKLQLQQLRV. In terms of domain architecture, LRRCT spans 716 to 773; it reads NPFECDCTMDWLQRINNLTTRQHPRVMDMANIECVMPHARGAAVRPLSGLRPQDFLCR. 3 disulfides stabilise this stretch: Cys-722-Cys-772, Cys-796-Cys-802, and Cys-800-Cys-815. LRR repeat units follow at residues 828 to 851, 852 to 875, 876 to 899, 900 to 923, 925 to 947, and 951 to 979; these read PMDSSVVYLDGNNFPVLKNHAFIG, RKNLRALYVNGSQVAAIQNRTFAS, LASLQLLHLADNKLRTLHGYEFEQ, LSALRELYLQNNQLTTIENATLAP, AALELIRIDGNRLVTLPIWQMHA, and GTRLKSISLGRNQWSCRCQFLQALTSYVA. Cys-966 and Cys-993 are disulfide-bonded. Residues 1050–1070 traverse the membrane as a helical segment; it reads LLAAALALLFLLVVIAMVFAF. The Cytoplasmic portion of the chain corresponds to 1071–1446; the sequence is RESLRIWLFA…QGPHVQAYLV (376 aa). Residues 1096-1233 form the TIR domain; it reads KLYDAVLLHS…HFWEKLRYAL (138 aa). 2 disordered regions span residues 1301–1332 and 1388–1446; these read QNYSTATTATPSPRPQRRGEQPGSGSGGNHHL and RPKR…AYLV. The segment covering 1395 to 1413 has biased composition (polar residues); it reads HLQQAQAGTLGSKASQAAH. Residues 1414-1426 show a composition bias toward low complexity; it reads QQQQQQQQQQQQQ. Residues 1427-1439 are compositionally biased toward polar residues; that stretch reads PNPTAVSGQQQGP.

It belongs to the Toll-like receptor family. As to expression, expressed in the fan-shaped body and the ellipsoid body, which are components of the locomotion center in the CNS (at protein level).

The protein localises to the cell membrane. In terms of biological role, toll-related receptor which binds to the neurotrophins NT1 and spz5. Essential for antiviral autophagy, it detects and binds to the vesicular stomatitis virus (vsv) following infection. This role is likely to be independent of the canonical Toll, immune deficiency, and JAK-STAT signaling pathways. Functions in olfactory circuit assembly by promoting synaptic partner matching between olfactory receptor neurons (ORN) axons and projection neurons (PN) dendrites partners in the antennal lobe. Function in the Va1d ORNs is necessary and sufficient for correct targeting to their partner PN dendrites. Also involved in the targeting of other classes of ORN axons. Functions with Toll-6 to regulate motor axon targeting and neuronal survival in the central nervous system (CNS). May be an upstream component of the NF-kappa-B (rel) regulatory cascade. This chain is Toll-like receptor 7, found in Drosophila melanogaster (Fruit fly).